The chain runs to 63 residues: Small ribosomal subunit protein bS21 (63 aa).

The protein belongs to the bacterial ribosomal protein bS21 family.

In Porphyromonas gingivalis (strain ATCC BAA-308 / W83), this protein is Small ribosomal subunit protein bS21.